The primary structure comprises 333 residues: Dihydroorotate dehydrogenase (quinone) (333 aa).

Residues 56-60 and Thr80 each bind FMN; that span reads AGLDK. Lys60 contacts substrate. Substrate is bound at residue 105–109; that stretch reads NRMGF. Positions 133 and 166 each coordinate FMN. Asn166 serves as a coordination point for substrate. Ser169 serves as the catalytic Nucleophile. Asn171 contributes to the substrate binding site. FMN-binding residues include Lys211 and Thr239. Position 240-241 (240-241) interacts with substrate; that stretch reads NT. Residues Gly262, Gly291, and 312-313 each bind FMN; that span reads YS.

Belongs to the dihydroorotate dehydrogenase family. Type 2 subfamily. As to quaternary structure, monomer. FMN serves as cofactor.

It localises to the cell membrane. It carries out the reaction (S)-dihydroorotate + a quinone = orotate + a quinol. It functions in the pathway pyrimidine metabolism; UMP biosynthesis via de novo pathway; orotate from (S)-dihydroorotate (quinone route): step 1/1. Its function is as follows. Catalyzes the conversion of dihydroorotate to orotate with quinone as electron acceptor. The chain is Dihydroorotate dehydrogenase (quinone) from Legionella pneumophila (strain Corby).